We begin with the raw amino-acid sequence, 192 residues long: A-type ATP synthase subunit E (192 aa).

It belongs to the V-ATPase E subunit family. As to quaternary structure, has multiple subunits with at least A(3), B(3), C, D, E, F, H, I and proteolipid K(x).

The protein resides in the cell membrane. Its function is as follows. Component of the A-type ATP synthase that produces ATP from ADP in the presence of a proton gradient across the membrane. This Methanoculleus marisnigri (strain ATCC 35101 / DSM 1498 / JR1) protein is A-type ATP synthase subunit E.